An 89-amino-acid polypeptide reads, in one-letter code: uncharacterized protein (89 aa).

It to B.licheniformis xpaF1 and to B.subtilis XhlA.

This is an uncharacterized protein from Bacillus licheniformis.